We begin with the raw amino-acid sequence, 914 residues long: Inter-alpha-trypsin inhibitor heavy chain H1 (914 aa).

The N-terminal stretch at 1-30 (MDGAAVGLRVLLGLGLVSLLTLEAMPAAWG) is a signal peptide. Positions 31–36 (LATTGR) are excised as a propeptide. One can recognise a VIT domain in the interval 39 to 168 (AREKRQAVDT…KATFQLTYEE (130 aa)). An S-linked (Hex...) cysteine glycan is attached at cysteine 62. Residue serine 131 is modified to Phosphoserine. 2 N-linked (GlcNAc...) asparagine glycosylation sites follow: asparagine 288 and asparagine 291. The region spanning 293–453 (SKNLVFVIDI…FNFLEVMSME (161 aa)) is the VWFA domain. 2 positions are modified to phosphothreonine: threonine 405 and threonine 410. The N-linked (GlcNAc...) asparagine glycan is linked to asparagine 591. Threonine 656 carries an O-linked (GalNAc...) threonine glycan. Aspartate 1-(chondroitin 4-sulfate)-ester is present on aspartate 675. Positions 676–914 (PHFIIYVPQK…HTDYIVPDIF (239 aa)) are excised as a propeptide.

Belongs to the ITIH family. As to quaternary structure, I-alpha-I plasma protease inhibitors are assembled from one or two heavy chains (HC) and one light chain, bikunin. Inter-alpha-inhibitor (I-alpha-I) is composed of ITIH1/HC1, ITIH2/HC2 and bikunin. Interacts with TNFAIP6 (via Link and CUB domains). Heavy chains are linked to bikunin via chondroitin 4-sulfate esterified to the alpha-carboxyl of the C-terminal aspartate after propeptide cleavage. Post-translationally, the S-linked glycan is composed of two 6-carbon sugars, possibly Glc or Gal.

The protein localises to the secreted. Functionally, may act as a carrier of hyaluronan in serum or as a binding protein between hyaluronan and other matrix protein, including those on cell surfaces in tissues to regulate the localization, synthesis and degradation of hyaluronan which are essential to cells undergoing biological processes. The protein is Inter-alpha-trypsin inhibitor heavy chain H1 (ITIH1) of Mesocricetus auratus (Golden hamster).